The chain runs to 193 residues: N-(5'-phosphoribosyl)anthranilate isomerase (193 aa).

The protein belongs to the TrpF family.

The catalysed reaction is N-(5-phospho-beta-D-ribosyl)anthranilate = 1-(2-carboxyphenylamino)-1-deoxy-D-ribulose 5-phosphate. It participates in amino-acid biosynthesis; L-tryptophan biosynthesis; L-tryptophan from chorismate: step 3/5. The sequence is that of N-(5'-phosphoribosyl)anthranilate isomerase from Streptococcus mutans serotype c (strain ATCC 700610 / UA159).